We begin with the raw amino-acid sequence, 488 residues long: Calcium/calmodulin-dependent protein kinase type II subunit delta (488 aa).

Position 2 is an N-acetylalanine (alanine 2). The Protein kinase domain maps to 14-272 (YQLFEELGKG…ASEALKHPWI (259 aa)). Residues 20-28 (LGKGAFSVV) and lysine 43 each bind ATP. The Proton acceptor role is filled by aspartate 136. Residues 283-292 (HRQETVDCLK) form an autoinhibitory domain region. The residue at position 287 (threonine 287) is a Phosphothreonine; by autocatalysis. The segment at 291-301 (LKKFNARRKLK) is calmodulin-binding. Phosphothreonine; by autocatalysis is present on residues threonine 306 and threonine 307. Phosphoserine is present on serine 315. Position 317 is an N6-acetyllysine (lysine 317). A phosphoserine mark is found at serine 318 and serine 340. Residues 325-350 (GVKKRKSSSSVQMMESTESSNTTIED) are disordered. Positions 332–347 (SSSVQMMESTESSNTT) are enriched in polar residues. Position 341 is a phosphothreonine (threonine 341). Serine 343 is subject to Phosphoserine. Phosphothreonine is present on residues threonine 346 and threonine 347. Serine 414 bears the Phosphoserine mark.

It belongs to the protein kinase superfamily. CAMK Ser/Thr protein kinase family. CaMK subfamily. CAMK2 is composed of 4 different chains: alpha (CAMK2A), beta (CAMK2B), gamma (CAMK2G), and delta (CAMK2D). The different isoforms assemble into homo- or heteromultimeric holoenzymes composed of 12 subunits with two hexameric rings stacked one on top of the other. Interacts with RRAD and CACNB2. Post-translationally, autophosphorylation of Thr-287 following activation by Ca(2+)/calmodulin. Phosphorylation of Thr-287 locks the kinase into an activated state.

Its subcellular location is the cell membrane. The protein resides in the sarcolemma. It is found in the sarcoplasmic reticulum membrane. It catalyses the reaction L-seryl-[protein] + ATP = O-phospho-L-seryl-[protein] + ADP + H(+). The catalysed reaction is L-threonyl-[protein] + ATP = O-phospho-L-threonyl-[protein] + ADP + H(+). Its activity is regulated as follows. Activated by Ca(2+)/calmodulin. Binding of calmodulin results in conformational change that relieves intrasteric autoinhibition and allows autophosphorylation of Thr-287 which turns the kinase in a constitutively active form and confers to the kinase a Ca(2+)-independent activity. In terms of biological role, calcium/calmodulin-dependent protein kinase involved in the regulation of Ca(2+) homeostatis and excitation-contraction coupling (ECC) in heart by targeting ion channels, transporters and accessory proteins involved in Ca(2+) influx into the myocyte, Ca(2+) release from the sarcoplasmic reticulum (SR), SR Ca(2+) uptake and Na(+) and K(+) channel transport. Targets also transcription factors and signaling molecules to regulate heart function. In its activated form, is involved in the pathogenesis of dilated cardiomyopathy and heart failure. Contributes to cardiac decompensation and heart failure by regulating SR Ca(2+) release via direct phosphorylation of RYR2 Ca(2+) channel on 'Ser-2808'. In the nucleus, phosphorylates the MEF2 repressor HDAC4, promoting its nuclear export and binding to 14-3-3 protein, and expression of MEF2 and genes involved in the hypertrophic program. Is essential for left ventricular remodeling responses to myocardial infarction. In pathological myocardial remodeling acts downstream of the beta adrenergic receptor signaling cascade to regulate key proteins involved in ECC. Regulates Ca(2+) influx to myocytes by binding and phosphorylating the L-type Ca(2+) channel subunit beta-2 CACNB2. In addition to Ca(2+) channels, can target and regulate the cardiac sarcolemmal Na(+) channel Nav1.5/SCN5A and the K+ channel Kv4.3/KCND3, which contribute to arrhythmogenesis in heart failure. Phosphorylates phospholamban (PLN/PLB), an endogenous inhibitor of SERCA2A/ATP2A2, contributing to the enhancement of SR Ca(2+) uptake that may be important in frequency-dependent acceleration of relaxation (FDAR) and maintenance of contractile function during acidosis. May participate in the modulation of skeletal muscle function in response to exercise, by regulating SR Ca(2+) transport through phosphorylation of PLN/PLB and triadin, a ryanodine receptor-coupling factor. In response to interferon-gamma (IFN-gamma) stimulation, catalyzes phosphorylation of STAT1, stimulating the JAK-STAT signaling pathway. The sequence is that of Calcium/calmodulin-dependent protein kinase type II subunit delta (CAMK2D) from Bos taurus (Bovine).